The primary structure comprises 250 residues: Cell division protein ZapD (250 aa).

The protein belongs to the ZapD family. As to quaternary structure, interacts with FtsZ.

The protein localises to the cytoplasm. Cell division factor that enhances FtsZ-ring assembly. Directly interacts with FtsZ and promotes bundling of FtsZ protofilaments, with a reduction in FtsZ GTPase activity. The protein is Cell division protein ZapD of Yersinia pestis bv. Antiqua (strain Antiqua).